The sequence spans 328 residues: Pantothenate kinase (328 aa).

A compositionally biased stretch (polar residues) spans 1–12 (MAAPLNAQTRAP). Positions 1-22 (MAAPLNAQTRAPQATGRAPDFS) are disordered. ATP is bound at residue 113-120 (GSVAVGKS).

It belongs to the prokaryotic pantothenate kinase family.

The protein resides in the cytoplasm. It carries out the reaction (R)-pantothenate + ATP = (R)-4'-phosphopantothenate + ADP + H(+). Its pathway is cofactor biosynthesis; coenzyme A biosynthesis; CoA from (R)-pantothenate: step 1/5. This chain is Pantothenate kinase, found in Corynebacterium efficiens (strain DSM 44549 / YS-314 / AJ 12310 / JCM 11189 / NBRC 100395).